The primary structure comprises 282 residues: Pantothenate synthetase (282 aa).

An ATP-binding site is contributed by 32 to 39 (MGALHEGH). Catalysis depends on His39, which acts as the Proton donor. Gln63 is a binding site for (R)-pantoate. Gln63 is a binding site for beta-alanine. 149–152 (GEKD) contributes to the ATP binding site. Gln155 provides a ligand contact to (R)-pantoate. Residues Val178 and 186–189 (LSSR) each bind ATP.

The protein belongs to the pantothenate synthetase family. As to quaternary structure, homodimer.

The protein localises to the cytoplasm. It catalyses the reaction (R)-pantoate + beta-alanine + ATP = (R)-pantothenate + AMP + diphosphate + H(+). It functions in the pathway cofactor biosynthesis; (R)-pantothenate biosynthesis; (R)-pantothenate from (R)-pantoate and beta-alanine: step 1/1. Its function is as follows. Catalyzes the condensation of pantoate with beta-alanine in an ATP-dependent reaction via a pantoyl-adenylate intermediate. The protein is Pantothenate synthetase of Paracoccus denitrificans (strain Pd 1222).